The following is a 502-amino-acid chain: Cyclin-dependent kinase 19 (502 aa).

Met-1 carries the post-translational modification N-acetylmethionine. Positions 21–335 (EYEGCKVGRG…SEQALQDPYF (315 aa)) constitute a Protein kinase domain. Residues 27–35 (VGRGTYGHV) and Lys-52 contribute to the ATP site. Catalysis depends on Asp-151, which acts as the Proton acceptor. The tract at residues 359 to 502 (LNEDDPEEKG…YHPSHQAHRY (144 aa)) is disordered. Low complexity predominate over residues 371 to 392 (NQQQQQNQHQQPTAPPQQAAAP). A compositionally biased stretch (gly residues) spans 408–421 (TAGGAGAGVGGTGA). Residues 424 to 435 (QHSQDSSLNQVP) show a composition bias toward polar residues. At Ser-449 the chain carries Phosphoserine. A compositionally biased stretch (polar residues) spans 458–467 (YQHSSSRLNY). Residues 468–496 (QSSVQGSSQSQSTLGYSSSSQQSSQYHPS) are compositionally biased toward low complexity.

It belongs to the protein kinase superfamily. CMGC Ser/Thr protein kinase family. CDC2/CDKX subfamily.

It is found in the cytoplasm. The protein resides in the perinuclear region. The protein localises to the nucleus. It catalyses the reaction L-seryl-[protein] + ATP = O-phospho-L-seryl-[protein] + ADP + H(+). The enzyme catalyses L-threonyl-[protein] + ATP = O-phospho-L-threonyl-[protein] + ADP + H(+). The sequence is that of Cyclin-dependent kinase 19 (CDK19) from Homo sapiens (Human).